The primary structure comprises 1039 residues: Potassium-transporting ATPase alpha chain 2 (1039 aa).

Residues 1 to 102 (MHQKTPEIYS…NSLTPPKQTP (102 aa)) lie on the Cytoplasmic side of the membrane. The chain crosses the membrane as a helical span at residues 103 to 123 (EIVKFLKQMVGGFSILLWVGA). Topologically, residues 124–146 (FLCWIAYGIQYSSDKSASLNNVY) are lumenal. Residues 147-167 (LGCVLGLVVILTGIFAYYQEA) form a helical membrane-spanning segment. At 168 to 303 (KSTNIMSSFN…NEKTPIAIEI (136 aa)) the chain is on the cytoplasmic side. A helical transmembrane segment spans residues 304-323 (EHFVHIVAGVAVSIGILFFI). The Lumenal segment spans residues 324–335 (IAVSLKYQVLDS). Residues 336–353 (IIFLIGIIVANVPEGLLA) traverse the membrane as a helical segment. The Cytoplasmic segment spans residues 354-787 (TVTVTLSLTA…EEGRLIFDNL (434 aa)). Asp391 acts as the 4-aspartylphosphate intermediate in catalysis. 2 residues coordinate Mg(2+): Asp732 and Asp736. Residues 788–807 (KKTIAYSLTKNIAELCPFLI) form a helical membrane-spanning segment. The Lumenal segment spans residues 808–817 (YIIVGLPLPI). Residues 818–838 (GTITILFIDLGTDIIPSIALA) form a helical membrane-spanning segment. Over 839 to 858 (YEKAESDIMNRKPRHKNKDR) the chain is Cytoplasmic. Residues 859 to 881 (LVNQPLAVYSYLHIGLMQALGAF) traverse the membrane as a helical segment. At 882–933 (LVYFTVYAQEGFLPRTLINLRVEWEKDYVNDLKDSYGQEWTRYQREYLEWTG) the chain is on the lumenal side. Residues 934 to 953 (YTAFFVGILVQQIADLIIRK) form a helical membrane-spanning segment. At 954-967 (TRRNSIFQQGLFRN) the chain is on the cytoplasmic side. Residue Ser958 is modified to Phosphoserine; by PKA. Residues 968 to 986 (KVIWVGITSQIIIGLILSY) traverse the membrane as a helical segment. The Lumenal segment spans residues 987-1001 (GLGSVTALSFTMLRA). A helical membrane pass occupies residues 1002-1022 (QYWFVAVPHAILIWVYDEVRK). Residues 1023-1039 (LFIRLYPGSWWDKNMYY) are Cytoplasmic-facing.

The protein belongs to the cation transport ATPase (P-type) (TC 3.A.3) family. Type IIC subfamily. As to quaternary structure, the ATPase pump is composed of a catalytic alpha subunit and an auxiliary non-catalytic beta subunit. The alpha subunit pairs with the beta subunit of gastric H(+)/K(+) ATPase ATP4B or the beta subunit of Na(+)/K(+) ATPases ATP1B1 and ATP1B3; this interaction is required for the formation of a functionally active pump and its targeting at the plasma membrane. In terms of tissue distribution, expressed in airway epithelial cells (at protein level). Found in skin and kidney. Detected in prostate basal cells (at protein level). Expression is increased in benign prostate hyperplasia and tumor tissues (at protein level).

It localises to the apical cell membrane. It catalyses the reaction K(+)(out) + ATP + H2O + H(+)(in) = K(+)(in) + ADP + phosphate + 2 H(+)(out). It carries out the reaction K(+)(out) + Na(+)(in) + ATP + H2O = K(+)(in) + Na(+)(out) + ADP + phosphate + H(+). The ATPase activity is regulated by monovalent cations and pH. Up-regulated by K(+) ions in a dose-dependent way. Down-regulated by Na(+) ions. Inhibited by Na(+)/K(+)-ATPase inhibitor ouabain and H(+)/K(+)-ATPase inhibitor SCH-28080 with an intermediate sensitivity to completely resistant Na(+)/K(+)-ATPases and highly sensitive H(+)/K(+)-ATPases. Its function is as follows. The catalytic subunit of a H(+)/K(+) ATPase and/or Na(+)/K(+) ATPase pump which transports K(+) ions in exchange for Na(+) and/or H(+) ions across the apical membrane of epithelial cells. Uses ATP as an energy source to pump K(+) ions into the cell while transporting Na(+) and/or H(+) ions to the extracellular compartment. Involved in the maintenance of electrolyte homeostasis through K(+) ion absorption in kidney and colon. In the airway epithelium, may play a primary role in mucus acidification regulating its viscosity and clearance. The protein is Potassium-transporting ATPase alpha chain 2 of Homo sapiens (Human).